A 228-amino-acid polypeptide reads, in one-letter code: Ribose-5-phosphate isomerase A (228 aa).

Substrate-binding positions include 29 to 32, 85 to 88, and 98 to 101; these read TGST, DGAD, and KGGG. The active-site Proton acceptor is Glu-107. Lys-125 provides a ligand contact to substrate.

The protein belongs to the ribose 5-phosphate isomerase family. As to quaternary structure, homodimer.

The enzyme catalyses aldehydo-D-ribose 5-phosphate = D-ribulose 5-phosphate. It participates in carbohydrate degradation; pentose phosphate pathway; D-ribose 5-phosphate from D-ribulose 5-phosphate (non-oxidative stage): step 1/1. In terms of biological role, catalyzes the reversible conversion of ribose-5-phosphate to ribulose 5-phosphate. In Staphylococcus aureus (strain COL), this protein is Ribose-5-phosphate isomerase A.